A 630-amino-acid chain; its full sequence is Protein mono-ADP-ribosyltransferase PARP6 (630 aa).

An ADP-ribosylcysteine modification is found at Cys-237. One can recognise a PARP catalytic domain in the interval 394–620 (EMTQGSYLEI…QDPKIQKEIM (227 aa)). Asp-600 is subject to ADP-ribosyl aspartic acid.

It belongs to the ARTD/PARP family. In terms of processing, auto-mono-ADP-ribosylated.

The catalysed reaction is L-aspartyl-[protein] + NAD(+) = 4-O-(ADP-D-ribosyl)-L-aspartyl-[protein] + nicotinamide. The enzyme catalyses L-cysteinyl-[protein] + NAD(+) = S-(ADP-D-ribosyl)-L-cysteinyl-[protein] + nicotinamide + H(+). Mono-ADP-ribosyltransferase that mediates mono-ADP-ribosylation of target proteins. This Homo sapiens (Human) protein is Protein mono-ADP-ribosyltransferase PARP6.